The primary structure comprises 30 residues: Nattererin-2 (30 aa).

As to expression, expressed by the skin glands.

It localises to the secreted. Functionally, probably has antibacterial activity. The polypeptide is Nattererin-2 (Physalaemus nattereri (Cuyaba dwarf frog)).